Reading from the N-terminus, the 329-residue chain is Glycosyltransferase family protein 64 C3 (329 aa).

The signal sequence occupies residues 1–27 (MGVKSVRFSIWFLFVVTDLVFCRTLSG). Asparagine 99 carries N-linked (GlcNAc...) asparagine glycosylation. Substrate is bound by residues 118 to 123 (SSLNAR), 139 to 141 (DDD), arginine 169, 226 to 230 (RNCED), and 271 to 284 (VGLS…RKRR). Aspartate 141 serves as a coordination point for Mn(2+). The cysteines at positions 228 and 287 are disulfide-linked. The active site involves aspartate 230. Residues 268-284 (VRDVGLSSRRVEHRKRR) form a substrate binding region.

It belongs to the glycosyltransferase 64 family. It depends on Mn(2+) as a cofactor.

Its pathway is protein modification; protein glycosylation. Probable glycosyltransferase. The protein is Glycosyltransferase family protein 64 C3 of Arabidopsis thaliana (Mouse-ear cress).